Consider the following 91-residue polypeptide: MARMVQCIKLNKEAEGMDFAPLPGELGKRIWNQVSKEAWAGWLKQQTMLINENRLNMADPRARQYLLKQVEKHFFEGGADTAQGYVPPPAE.

It belongs to the Fe(2+)-trafficking protein family.

In terms of biological role, could be a mediator in iron transactions between iron acquisition and iron-requiring processes, such as synthesis and/or repair of Fe-S clusters in biosynthetic enzymes. This chain is Probable Fe(2+)-trafficking protein, found in Polynucleobacter necessarius subsp. necessarius (strain STIR1).